Consider the following 321-residue polypeptide: RNA/RNP complex-1-interacting phosphatase (321 aa).

Residues 1–11 show a composition bias toward basic residues; sequence MNQHYGRHGRG. The segment at 1-27 is disordered; that stretch reads MNQHYGRHGRGRGRDFAACAPPKKKGR. In terms of domain architecture, Tyrosine-protein phosphatase spans 60–207; sequence FEAKLMPEEC…LQKRHVRKNR (148 aa). Cysteine 151 serves as the catalytic Phosphocysteine intermediate. 152 to 157 serves as a coordination point for substrate; the sequence is THGLNR. Arginine 157 acts as the Proton donor/acceptor in catalysis. A disordered region spans residues 205–262; sequence KNRNVSAPRTDGLEDSADPTEQVYTNNKPVKKKPRKNRRGGHLAPSQHFQHQTQSSPY. Basic residues predominate over residues 233–245; the sequence is PVKKKPRKNRRGG. The span at 251–262 shows a compositional bias: polar residues; that stretch reads QHFQHQTQSSPY.

This sequence belongs to the protein-tyrosine phosphatase family. Non-receptor class dual specificity subfamily. In terms of assembly, monomer. May interact with SFRS7 and SFRS9/SRP30C.

Its subcellular location is the nucleus. The protein resides in the nucleus speckle. Possesses RNA 5'-triphosphatase and diphosphatase activities, but displays a poor protein-tyrosine phosphatase activity. In addition, has phosphatase activity with ATP, ADP and O-methylfluorescein phosphate (in vitro). Binds to RNA. May participate in nuclear mRNA metabolism. The sequence is that of RNA/RNP complex-1-interacting phosphatase (Dusp11) from Mus musculus (Mouse).